Consider the following 292-residue polypeptide: Ribosomal protein L11 methyltransferase (292 aa).

S-adenosyl-L-methionine contacts are provided by Thr-136, Gly-159, Asp-181, and Asn-228.

This sequence belongs to the methyltransferase superfamily. PrmA family.

It is found in the cytoplasm. It carries out the reaction L-lysyl-[protein] + 3 S-adenosyl-L-methionine = N(6),N(6),N(6)-trimethyl-L-lysyl-[protein] + 3 S-adenosyl-L-homocysteine + 3 H(+). Methylates ribosomal protein L11. In Rhizobium leguminosarum bv. trifolii (strain WSM2304), this protein is Ribosomal protein L11 methyltransferase.